The chain runs to 208 residues: Ras-related protein Rab-6A (208 aa).

An N-acetylserine modification is found at Ser-2. 10 residues coordinate GTP: Ser-23, Val-24, Gly-25, Lys-26, Thr-27, Ser-28, Asp-39, Asn-40, Tyr-42, and Thr-45. Thr-27 is a binding site for Mg(2+). Positions 32-50 (RFMYDSFDNTYQATIGIDF) match the Switch 1 motif. Thr-45 and Asp-68 together coordinate Mg(2+). The Switch 2 signature appears at 69 to 88 (TAGQERFRSLIPSYIRDSAA). Positions 71, 126, 127, 129, 156, 157, and 158 each coordinate GTP. 2 S-geranylgeranyl cysteine lipidation sites follow: Cys-206 and Cys-208. Residue Cys-208 is modified to Cysteine methyl ester.

Belongs to the small GTPase superfamily. Rab family. Mg(2+) is required as a cofactor.

It is found in the golgi apparatus membrane. The catalysed reaction is GTP + H2O = GDP + phosphate + H(+). Its activity is regulated as follows. Regulated by guanine nucleotide exchange factors (GEFs) which promote the exchange of bound GDP for free GTP. Regulated by GTPase activating proteins (GAPs) which increase the GTP hydrolysis activity. Inhibited by GDP dissociation inhibitors (GDIs). The small GTPases Rab are key regulators of intracellular membrane trafficking, from the formation of transport vesicles to their fusion with membranes. Rabs cycle between an inactive GDP-bound form and an active GTP-bound form that is able to recruit to membranes different sets of downstream effectors directly responsible for vesicle formation, movement, tethering and fusion. RAB6A acts as a regulator of COPI-independent retrograde transport from the Golgi apparatus towards the endoplasmic reticulum (ER). This is Ras-related protein Rab-6A (RAB6A) from Gallus gallus (Chicken).